The primary structure comprises 301 residues: Ribosomal RNA small subunit methyltransferase H (301 aa).

Residues 35–37 (GGH), aspartate 55, phenylalanine 84, aspartate 105, and glutamine 112 each bind S-adenosyl-L-methionine.

It belongs to the methyltransferase superfamily. RsmH family.

It localises to the cytoplasm. It catalyses the reaction cytidine(1402) in 16S rRNA + S-adenosyl-L-methionine = N(4)-methylcytidine(1402) in 16S rRNA + S-adenosyl-L-homocysteine + H(+). Its function is as follows. Specifically methylates the N4 position of cytidine in position 1402 (C1402) of 16S rRNA. The polypeptide is Ribosomal RNA small subunit methyltransferase H (Chloroflexus aurantiacus (strain ATCC 29366 / DSM 635 / J-10-fl)).